Here is a 1331-residue protein sequence, read N- to C-terminus: DNA-directed RNA polymerase subunit beta' (1331 aa).

Positions 60, 62, 75, and 78 each coordinate Zn(2+). Positions 535, 537, and 539 each coordinate Mg(2+). 4 residues coordinate Zn(2+): cysteine 902, cysteine 979, cysteine 986, and cysteine 989.

This sequence belongs to the RNA polymerase beta' chain family. As to quaternary structure, the RNAP catalytic core consists of 2 alpha, 1 beta, 1 beta' and 1 omega subunit. When a sigma factor is associated with the core the holoenzyme is formed, which can initiate transcription. Requires Mg(2+) as cofactor. Zn(2+) is required as a cofactor.

It catalyses the reaction RNA(n) + a ribonucleoside 5'-triphosphate = RNA(n+1) + diphosphate. DNA-dependent RNA polymerase catalyzes the transcription of DNA into RNA using the four ribonucleoside triphosphates as substrates. The sequence is that of DNA-directed RNA polymerase subunit beta' from Corynebacterium aurimucosum (strain ATCC 700975 / DSM 44827 / CIP 107346 / CN-1) (Corynebacterium nigricans).